The primary structure comprises 221 residues: Probable endo-1,4-beta-xylanase B (221 aa).

A signal peptide spans 1–19; sequence MVSFSSLALALSTVVGVLA. In terms of domain architecture, GH11 spans 33–221; sequence QLTHSQTGTK…SSGSATMTVS (189 aa). The Nucleophile role is filled by Glu117. Glu208 functions as the Proton donor in the catalytic mechanism.

This sequence belongs to the glycosyl hydrolase 11 (cellulase G) family.

The protein localises to the secreted. The catalysed reaction is Endohydrolysis of (1-&gt;4)-beta-D-xylosidic linkages in xylans.. It participates in glycan degradation; xylan degradation. Endo-1,4-beta-xylanase involved in the hydrolysis of xylan, a major structural heterogeneous polysaccharide found in plant biomass representing the second most abundant polysaccharide in the biosphere, after cellulose. The sequence is that of Probable endo-1,4-beta-xylanase B (xlnB) from Aspergillus clavatus (strain ATCC 1007 / CBS 513.65 / DSM 816 / NCTC 3887 / NRRL 1 / QM 1276 / 107).